An 875-amino-acid polypeptide reads, in one-letter code: Alanine--tRNA ligase (875 aa).

Residues histidine 562, histidine 566, cysteine 665, and histidine 669 each coordinate Zn(2+).

The protein belongs to the class-II aminoacyl-tRNA synthetase family. Zn(2+) serves as cofactor.

It is found in the cytoplasm. It catalyses the reaction tRNA(Ala) + L-alanine + ATP = L-alanyl-tRNA(Ala) + AMP + diphosphate. Catalyzes the attachment of alanine to tRNA(Ala) in a two-step reaction: alanine is first activated by ATP to form Ala-AMP and then transferred to the acceptor end of tRNA(Ala). Also edits incorrectly charged Ser-tRNA(Ala) and Gly-tRNA(Ala) via its editing domain. This is Alanine--tRNA ligase from Saccharophagus degradans (strain 2-40 / ATCC 43961 / DSM 17024).